Reading from the N-terminus, the 123-residue chain is Large ribosomal subunit protein bL12 (123 aa).

The protein belongs to the bacterial ribosomal protein bL12 family. Homodimer. Part of the ribosomal stalk of the 50S ribosomal subunit. Forms a multimeric L10(L12)X complex, where L10 forms an elongated spine to which 2 to 4 L12 dimers bind in a sequential fashion. Binds GTP-bound translation factors.

Its function is as follows. Forms part of the ribosomal stalk which helps the ribosome interact with GTP-bound translation factors. Is thus essential for accurate translation. This chain is Large ribosomal subunit protein bL12, found in Geobacillus thermodenitrificans (strain NG80-2).